We begin with the raw amino-acid sequence, 319 residues long: 1-aminocyclopropane-1-carboxylate oxidase (319 aa).

Residues 153-253 (PTFGTKVSNY…RMSIASFYNP (101 aa)) enclose the Fe2OG dioxygenase domain. Fe cation contacts are provided by histidine 177, aspartate 179, and histidine 234.

This sequence belongs to the iron/ascorbate-dependent oxidoreductase family. It depends on Fe cation as a cofactor.

It carries out the reaction 1-aminocyclopropane-1-carboxylate + L-ascorbate + O2 = ethene + L-dehydroascorbate + hydrogen cyanide + CO2 + 2 H2O. The protein operates within alkene biosynthesis; ethylene biosynthesis via S-adenosyl-L-methionine; ethylene from S-adenosyl-L-methionine: step 2/2. This is 1-aminocyclopropane-1-carboxylate oxidase (ACO1) from Prunus mume (Japanese apricot).